Reading from the N-terminus, the 276-residue chain is Type 2 phosphatidylinositol 4,5-bisphosphate 4-phosphatase (276 aa).

The segment covering 1–10 has biased composition (basic and acidic residues); that stretch reads MAADGIDERS. The segment at 1–27 is disordered; that stretch reads MAADGIDERSPLISPSSGNVTPTAPPY. The span at 13–27 shows a compositional bias: polar residues; the sequence is ISPSSGNVTPTAPPY. Cys106 is an active-site residue. Positions 106-112 match the CX5R motif motif; sequence CKDISRR. Helical transmembrane passes span 211-231 and 246-266; these read CCTYITMGMICIFIGVGLTVG and WAVAYLVGLVCLIRACYWGAI.

It is found in the late endosome membrane. The protein resides in the lysosome membrane. It catalyses the reaction a 1,2-diacyl-sn-glycero-3-phospho-(1D-myo-inositol-4,5-bisphosphate) + H2O = a 1,2-diacyl-sn-glycero-3-phospho-(1D-myo-inositol-5-phosphate) + phosphate. Its function is as follows. Catalyzes the hydrolysis of phosphatidylinositol-4,5-bisphosphate (PtdIns-4,5-P2) to phosphatidylinositol-4-phosphate (PtdIns-4-P). This Xenopus tropicalis (Western clawed frog) protein is Type 2 phosphatidylinositol 4,5-bisphosphate 4-phosphatase (pip4p2).